The following is a 205-amino-acid chain: MSGKFIVIEGLEGAGKSSAIASVVTHLQAKGIQVETVREPGGTPLAESLRDLVKKKWEEKVSPTTELLLMYASRVQLVDNIIKPALSKNRWVIGDRHDLSSRAYQGGGRELGDELLQKIRKITLGNFTPDLTLLLDVEEKKGLERARERGELDRIEEEDLAFFQRTRQRYLNIAAKDPSIIVIDANQSMLDVHQSILRAIEEYLF.

10-17 is an ATP binding site; that stretch reads GLEGAGKS.

It belongs to the thymidylate kinase family.

It carries out the reaction dTMP + ATP = dTDP + ADP. Phosphorylation of dTMP to form dTDP in both de novo and salvage pathways of dTTP synthesis. The sequence is that of Thymidylate kinase from Idiomarina loihiensis (strain ATCC BAA-735 / DSM 15497 / L2-TR).